The chain runs to 113 residues: Large ribosomal subunit protein uL22 (113 aa).

The protein belongs to the universal ribosomal protein uL22 family. As to quaternary structure, part of the 50S ribosomal subunit.

This protein binds specifically to 23S rRNA; its binding is stimulated by other ribosomal proteins, e.g. L4, L17, and L20. It is important during the early stages of 50S assembly. It makes multiple contacts with different domains of the 23S rRNA in the assembled 50S subunit and ribosome. Its function is as follows. The globular domain of the protein is located near the polypeptide exit tunnel on the outside of the subunit, while an extended beta-hairpin is found that lines the wall of the exit tunnel in the center of the 70S ribosome. The polypeptide is Large ribosomal subunit protein uL22 (Carboxydothermus hydrogenoformans (strain ATCC BAA-161 / DSM 6008 / Z-2901)).